A 138-amino-acid polypeptide reads, in one-letter code: MAKEYSRTQRVAQEMQKEIAIILQREIKDPRVGMATVSGVEVSRDLAYAKVFVTFLNDNTLEQVKTGVRALQDAAGFIHSLLGKAMRLRVVPELTFAYDNSLVEGMRMSNLVSQVVQNDRLRRSASPVDKTDREDKED.

The protein belongs to the RbfA family. Monomer. Binds 30S ribosomal subunits, but not 50S ribosomal subunits or 70S ribosomes.

The protein localises to the cytoplasm. In terms of biological role, one of several proteins that assist in the late maturation steps of the functional core of the 30S ribosomal subunit. Associates with free 30S ribosomal subunits (but not with 30S subunits that are part of 70S ribosomes or polysomes). Required for efficient processing of 16S rRNA. May interact with the 5'-terminal helix region of 16S rRNA. In Sodalis glossinidius (strain morsitans), this protein is Ribosome-binding factor A.